A 153-amino-acid polypeptide reads, in one-letter code: Small ribosomal subunit protein uS19 (153 aa).

Belongs to the universal ribosomal protein uS19 family.

The sequence is that of Small ribosomal subunit protein uS19 (RPS15) from Elaeis oleifera (American oil palm).